The chain runs to 100 residues: ATP synthase subunit g 2, mitochondrial (100 aa).

The protein belongs to the ATPase g subunit family. In terms of assembly, F-type ATPases have 2 components, CF(1) - the catalytic core - and CF(0) - the membrane proton channel. CF(0) seems to have nine subunits: a, b, c, d, e, f, g, F6 and 8 (or A6L).

It localises to the mitochondrion membrane. Its function is as follows. Mitochondrial membrane ATP synthase (F(1)F(0) ATP synthase or Complex V) produces ATP from ADP in the presence of a proton gradient across the membrane which is generated by electron transport complexes of the respiratory chain. F-type ATPases consist of two structural domains, F(1) - containing the extramembraneous catalytic core, and F(0) - containing the membrane proton channel, linked together by a central stalk and a peripheral stalk. During catalysis, ATP synthesis in the catalytic domain of F(1) is coupled via a rotary mechanism of the central stalk subunits to proton translocation. Part of the complex F(0) domain. Minor subunit located with subunit a in the membrane. The sequence is that of ATP synthase subunit g 2, mitochondrial from Homo sapiens (Human).